A 213-amino-acid polypeptide reads, in one-letter code: Thymidylate kinase (213 aa).

10–17 (GLEGAGKT) lines the ATP pocket.

The protein belongs to the thymidylate kinase family.

It catalyses the reaction dTMP + ATP = dTDP + ADP. Phosphorylation of dTMP to form dTDP in both de novo and salvage pathways of dTTP synthesis. This Escherichia coli O157:H7 (strain EC4115 / EHEC) protein is Thymidylate kinase.